The primary structure comprises 311 residues: HPr kinase/phosphorylase (311 aa).

Catalysis depends on residues His139 and Lys160. 154-161 contributes to the ATP binding site; that stretch reads GASGVGKS. Residue Ser161 participates in Mg(2+) binding. Catalysis depends on Asp178, which acts as the Proton acceptor; for phosphorylation activity. Proton donor; for dephosphorylation activity. The segment at 202–211 is important for the catalytic mechanism of both phosphorylation and dephosphorylation; that stretch reads LEIRGIGIID. Position 203 (Glu203) interacts with Mg(2+). Residue Arg244 is part of the active site. The tract at residues 265 to 270 is important for the catalytic mechanism of dephosphorylation; sequence PVRPGR.

Belongs to the HPrK/P family. Homohexamer. Mg(2+) is required as a cofactor.

The enzyme catalyses [HPr protein]-L-serine + ATP = [HPr protein]-O-phospho-L-serine + ADP + H(+). It carries out the reaction [HPr protein]-O-phospho-L-serine + phosphate + H(+) = [HPr protein]-L-serine + diphosphate. Functionally, catalyzes the ATP- as well as the pyrophosphate-dependent phosphorylation of a specific serine residue in HPr, a phosphocarrier protein of the phosphoenolpyruvate-dependent sugar phosphotransferase system (PTS). HprK/P also catalyzes the pyrophosphate-producing, inorganic phosphate-dependent dephosphorylation (phosphorolysis) of seryl-phosphorylated HPr (P-Ser-HPr). The two antagonistic activities of HprK/P are regulated by several intracellular metabolites, which change their concentration in response to the absence or presence of rapidly metabolisable carbon sources (glucose, fructose, etc.) in the growth medium. Therefore, by controlling the phosphorylation state of HPr, HPrK/P is a sensor enzyme that plays a major role in the regulation of carbon metabolism and sugar transport: it mediates carbon catabolite repression (CCR), and regulates PTS-catalyzed carbohydrate uptake and inducer exclusion. The sequence is that of HPr kinase/phosphorylase from Exiguobacterium sibiricum (strain DSM 17290 / CCUG 55495 / CIP 109462 / JCM 13490 / 255-15).